A 257-amino-acid chain; its full sequence is Zinc import ATP-binding protein ZnuC (257 aa).

Residues 6–221 (IRLEQVGVSF…PAFVELFGQN (216 aa)) enclose the ABC transporter domain. An ATP-binding site is contributed by 38-45 (GPNGAGKT).

It belongs to the ABC transporter superfamily. Zinc importer (TC 3.A.1.15.5) family. In terms of assembly, the complex is composed of two ATP-binding proteins (ZnuC), two transmembrane proteins (ZnuB) and a solute-binding protein (ZnuA).

Its subcellular location is the cell inner membrane. The catalysed reaction is Zn(2+)(out) + ATP(in) + H2O(in) = Zn(2+)(in) + ADP(in) + phosphate(in) + H(+)(in). Its function is as follows. Part of the ABC transporter complex ZnuABC involved in zinc import. Responsible for energy coupling to the transport system. The polypeptide is Zinc import ATP-binding protein ZnuC (Pseudomonas entomophila (strain L48)).